A 221-amino-acid polypeptide reads, in one-letter code: Transmembrane protein 225B (221 aa).

Transmembrane regions follow at residues 14–34 (WAIVPALTSLGYLIILVVSIF), 77–97 (VFLLSAVFLAFVTTFIMMPFA), 109–129 (FVLACISFFTGACAFLALVLH), and 147–167 (VLWPYYVLGFGIFLFIVAGTI).

The protein localises to the membrane. This Homo sapiens (Human) protein is Transmembrane protein 225B.